Here is a 774-residue protein sequence, read N- to C-terminus: Acetyl-CoA decarbonylase/synthase complex subunit alpha (774 aa).

Residues cysteine 73, cysteine 76, cysteine 77, cysteine 79, cysteine 84, and cysteine 94 each contribute to the [4Fe-4S] cluster site. Position 117 (histidine 117) interacts with CO. The [Ni-4Fe-4S] cluster site is built by histidine 251, cysteine 279, and cysteine 318. 2 4Fe-4S ferredoxin-type domains span residues 398–427 (LNEVVELAKQCTECGWCNRNCPNAFKVKEA) and 436–466 (FKGFIDLYKRCYGCGRCEAICPRNLPIVSMT). Positions 408, 411, 414, 418, 446, 449, 452, and 456 each coordinate [4Fe-4S] cluster. Residues cysteine 514, cysteine 543, and cysteine 578 each coordinate [Ni-4Fe-4S] cluster.

This sequence belongs to the Ni-containing carbon monoxide dehydrogenase family. As to quaternary structure, heterotetramer of two alpha and two epsilon subunits. The ACDS complex is made up of alpha, epsilon, beta, gamma and delta subunits with a probable stoichiometry of (alpha(2)epsilon(2))(4)-beta(8)-(gamma(1)delta(1))(8). [4Fe-4S] cluster serves as cofactor. [Ni-4Fe-4S] cluster is required as a cofactor.

It catalyses the reaction CO + 2 oxidized [2Fe-2S]-[ferredoxin] + H2O = 2 reduced [2Fe-2S]-[ferredoxin] + CO2 + 2 H(+). In terms of biological role, part of the ACDS complex that catalyzes the reversible cleavage of acetyl-CoA, allowing autotrophic growth from CO(2). The alpha-epsilon subcomponent functions as a carbon monoxide dehydrogenase. This chain is Acetyl-CoA decarbonylase/synthase complex subunit alpha, found in Methanocaldococcus jannaschii (strain ATCC 43067 / DSM 2661 / JAL-1 / JCM 10045 / NBRC 100440) (Methanococcus jannaschii).